Here is a 508-residue protein sequence, read N- to C-terminus: Cobyric acid synthase (508 aa).

Residues 255–454 enclose the GATase cobBQ-type domain; sequence ELNIAVLKLP…LHGVFESGPW (200 aa). Cys336 (nucleophile) is an active-site residue. The active site involves His446.

Belongs to the CobB/CobQ family. CobQ subfamily.

The protein operates within cofactor biosynthesis; adenosylcobalamin biosynthesis. Functionally, catalyzes amidations at positions B, D, E, and G on adenosylcobyrinic A,C-diamide. NH(2) groups are provided by glutamine, and one molecule of ATP is hydrogenolyzed for each amidation. In Synechococcus sp. (strain CC9311), this protein is Cobyric acid synthase.